Reading from the N-terminus, the 249-residue chain is Type III pantothenate kinase (249 aa).

Residue 6 to 13 (DCGNSLIK) coordinates ATP. Substrate is bound by residues Tyr-93 and 100-103 (GLDR). Asp-102 acts as the Proton acceptor in catalysis. Asp-122 contacts K(+). Thr-125 is an ATP binding site. Thr-181 is a substrate binding site.

It belongs to the type III pantothenate kinase family. As to quaternary structure, homodimer. The cofactor is NH4(+). K(+) serves as cofactor.

The protein resides in the cytoplasm. It catalyses the reaction (R)-pantothenate + ATP = (R)-4'-phosphopantothenate + ADP + H(+). The protein operates within cofactor biosynthesis; coenzyme A biosynthesis; CoA from (R)-pantothenate: step 1/5. Its function is as follows. Catalyzes the phosphorylation of pantothenate (Pan), the first step in CoA biosynthesis. The polypeptide is Type III pantothenate kinase (Pseudomonas paraeruginosa (strain DSM 24068 / PA7) (Pseudomonas aeruginosa (strain PA7))).